Here is a 91-residue protein sequence, read N- to C-terminus: Large ribosomal subunit protein eL43 (91 aa).

The segment at 39–60 (CPFCGKDAMRRGAVGIWNCSKC) adopts a C4-type zinc-finger fold.

Belongs to the eukaryotic ribosomal protein eL43 family.

This Ostertagia ostertagi (Brown stomach worm) protein is Large ribosomal subunit protein eL43 (rpl-37a).